Consider the following 299-residue polypeptide: ATP phosphoribosyltransferase (299 aa).

The protein belongs to the ATP phosphoribosyltransferase family. Long subfamily. As to quaternary structure, equilibrium between an active dimeric form, an inactive hexameric form and higher aggregates. Interconversion between the various forms is largely reversible and is influenced by the natural substrates and inhibitors of the enzyme. It depends on Mg(2+) as a cofactor.

The protein resides in the cytoplasm. The catalysed reaction is 1-(5-phospho-beta-D-ribosyl)-ATP + diphosphate = 5-phospho-alpha-D-ribose 1-diphosphate + ATP. Its pathway is amino-acid biosynthesis; L-histidine biosynthesis; L-histidine from 5-phospho-alpha-D-ribose 1-diphosphate: step 1/9. With respect to regulation, feedback inhibited by histidine. Catalyzes the condensation of ATP and 5-phosphoribose 1-diphosphate to form N'-(5'-phosphoribosyl)-ATP (PR-ATP). Has a crucial role in the pathway because the rate of histidine biosynthesis seems to be controlled primarily by regulation of HisG enzymatic activity. The polypeptide is ATP phosphoribosyltransferase (Erwinia tasmaniensis (strain DSM 17950 / CFBP 7177 / CIP 109463 / NCPPB 4357 / Et1/99)).